The following is a 142-amino-acid chain: Deoxyuridine 5'-triphosphate nucleotidohydrolase (142 aa).

Residues 62 to 64 (RSG), N75, 79 to 81 (TID), and K89 each bind substrate.

Belongs to the dUTPase family. It depends on Mg(2+) as a cofactor.

It carries out the reaction dUTP + H2O = dUMP + diphosphate + H(+). Its pathway is pyrimidine metabolism; dUMP biosynthesis; dUMP from dCTP (dUTP route): step 2/2. In terms of biological role, this enzyme is involved in nucleotide metabolism: it produces dUMP, the immediate precursor of thymidine nucleotides and it decreases the intracellular concentration of dUTP so that uracil cannot be incorporated into DNA. This chain is Deoxyuridine 5'-triphosphate nucleotidohydrolase, found in Nautilia profundicola (strain ATCC BAA-1463 / DSM 18972 / AmH).